A 74-amino-acid polypeptide reads, in one-letter code: uncharacterized protein (74 aa).

The first 25 residues, 1-25 (MMMTDLPENIRKTAVALLRLGEATA), serve as a signal peptide directing secretion.

This is an uncharacterized protein from Archaeoglobus fulgidus (strain ATCC 49558 / DSM 4304 / JCM 9628 / NBRC 100126 / VC-16).